A 698-amino-acid chain; its full sequence is Probable metal-nicotianamine transporter YSL17 (698 aa).

A disordered region spans residues Met1–Leu36. Transmembrane regions (helical) follow at residues Val43 to Met63, Leu67 to Ala87, Ile114 to Gly134, Ile157 to Pro177, Val216 to Phe236, Met277 to Ile297, Val322 to Val342, Trp395 to Leu415, Val424 to Val444, Ser463 to Val483, Val511 to Phe531, Leu567 to Ala587, Ile607 to Cys627, and Leu644 to Ser664.

This sequence belongs to the YSL (TC 2.A.67.2) family. Expressed at low levels in roots.

Its subcellular location is the membrane. Its function is as follows. May be involved in the transport of nicotianamine-chelated metals. In Oryza sativa subsp. japonica (Rice), this protein is Probable metal-nicotianamine transporter YSL17 (YSL17).